The primary structure comprises 317 residues: MSVRLGIVMDPIASISYKKDSSLAMLLAAQARGWSLFYMEQQDLYQGEGKARARMRPLKVFADPARWFELGEEQDSPLAELDVILMRKDPPFDMEFVYSTYLLEQAENDGVLVVNRPQSLRDCNEKMFATLFPQCTTPTLVSRRPDIIREFTAKHADVILKPLDGMGGTSIFRHRAGDPNLSVILETLTALGTQQIMAQAYLPAIKDGDKRILMIDGEPVDYCLARIPASGETRGNLAAGGRGEARPLTERDRWIAAQVGPTLREKGLLFVGLDVIGDYLTEINVTSPTCIREIDAAYNTDIGGKLMDAIDRKLKAR.

The 187-residue stretch at 125–311 (EKMFATLFPQ…IGGKLMDAID (187 aa)) folds into the ATP-grasp domain. ATP is bound at residue 152–208 (TAKHADVILKPLDGMGGTSIFRHRAGDPNLSVILETLTALGTQQIMAQAYLPAIKDG). Positions 282 and 284 each coordinate Mg(2+).

Belongs to the prokaryotic GSH synthase family. Mg(2+) serves as cofactor. The cofactor is Mn(2+).

It carries out the reaction gamma-L-glutamyl-L-cysteine + glycine + ATP = glutathione + ADP + phosphate + H(+). Its pathway is sulfur metabolism; glutathione biosynthesis; glutathione from L-cysteine and L-glutamate: step 2/2. The sequence is that of Glutathione synthetase from Pseudomonas putida (strain ATCC 47054 / DSM 6125 / CFBP 8728 / NCIMB 11950 / KT2440).